Consider the following 293-residue polypeptide: MEKSTWTTKVGLAQMLKGGVIMDVVTPEQARIAEEAGAVAVMALERVPADIRAQGGVARMSDPELILAIKQAVTIPVMAKARIGHFVEAQVLEAIGVDYIDESEVLTPADEEHHINKHKFRVPFVCGCRNLGEALRRIAEGAAMLRTKGEAGTGNVVEAVRHARAVYSEIRRLQSMNEDELFTYAKQIQAPYELVKQVATEGKLPVVNFAAGGIATPADAALLMQLGVDGIFVGSGIFKSGNPIKRARAIVEATTHYNDPEIIAEVSKGLGEAMVGINIDQIPAEQLMARRGW.

Position 23 (Asp23) interacts with D-ribose 5-phosphate. The active-site Schiff-base intermediate with D-ribose 5-phosphate is Lys80. A D-ribose 5-phosphate-binding site is contributed by Gly152. A D-glyceraldehyde 3-phosphate-binding site is contributed by Arg164. D-ribose 5-phosphate-binding positions include Gly213 and Gly234–Ser235.

The protein belongs to the PdxS/SNZ family. In the presence of PdxT, forms a dodecamer of heterodimers.

It catalyses the reaction aldehydo-D-ribose 5-phosphate + D-glyceraldehyde 3-phosphate + L-glutamine = pyridoxal 5'-phosphate + L-glutamate + phosphate + 3 H2O + H(+). It functions in the pathway cofactor biosynthesis; pyridoxal 5'-phosphate biosynthesis. Catalyzes the formation of pyridoxal 5'-phosphate from ribose 5-phosphate (RBP), glyceraldehyde 3-phosphate (G3P) and ammonia. The ammonia is provided by the PdxT subunit. Can also use ribulose 5-phosphate and dihydroxyacetone phosphate as substrates, resulting from enzyme-catalyzed isomerization of RBP and G3P, respectively. This chain is Pyridoxal 5'-phosphate synthase subunit PdxS, found in Chloroflexus aggregans (strain MD-66 / DSM 9485).